A 340-amino-acid chain; its full sequence is Protein RecA (340 aa).

65-72 (GPESGGKT) contributes to the ATP binding site.

It belongs to the RecA family.

It is found in the cytoplasm. Can catalyze the hydrolysis of ATP in the presence of single-stranded DNA, the ATP-dependent uptake of single-stranded DNA by duplex DNA, and the ATP-dependent hybridization of homologous single-stranded DNAs. It interacts with LexA causing its activation and leading to its autocatalytic cleavage. The sequence is that of Protein RecA from Thermus thermophilus (strain ATCC 27634 / DSM 579 / HB8).